The chain runs to 305 residues: Elongation factor Ts (305 aa).

The involved in Mg(2+) ion dislocation from EF-Tu stretch occupies residues 81–84; sequence TDFV.

The protein belongs to the EF-Ts family.

The protein localises to the cytoplasm. In terms of biological role, associates with the EF-Tu.GDP complex and induces the exchange of GDP to GTP. It remains bound to the aminoacyl-tRNA.EF-Tu.GTP complex up to the GTP hydrolysis stage on the ribosome. This Nitratiruptor sp. (strain SB155-2) protein is Elongation factor Ts.